Here is a 134-residue protein sequence, read N- to C-terminus: Profilin-1 (134 aa).

This sequence belongs to the profilin family. As to quaternary structure, occurs in many kinds of cells as a complex with monomeric actin in a 1:1 ratio.

It localises to the cytoplasm. The protein resides in the cytoskeleton. Its function is as follows. Binds to actin and affects the structure of the cytoskeleton. At high concentrations, profilin prevents the polymerization of actin, whereas it enhances it at low concentrations. By binding to PIP2, it inhibits the formation of IP3 and DG. The sequence is that of Profilin-1 (PRO1) from Nicotiana tabacum (Common tobacco).